Consider the following 456-residue polypeptide: Zinc finger protein 25 (456 aa).

The KRAB domain occupies 8-79 (VTLKDVIVEF…EVEFPHRGFP (72 aa)). C2H2-type zinc fingers lie at residues 118–140 (CECKECGKFFCQKSALIVHQHTH), 146–168 (YDCDKCGKSFSKNEDLIRHQKIH), 174–196 (YECKECKKIFYHLSSLSRHLRTH), 202–224 (YECNQCEKSFYQKPHLTEHQKTH), 230–252 (FECTECGKFFYVKAYLMVHQKTH), 258–280 (YECKECGKAFSQKSHLTVHQRMH), 286–308 (YKCKECGKFFSRNSHLKTHQRSH), 314–336 (YECKECRKCFYQKSALTVHQRTH), 342–364 (FECNKCGKTFYYKSDLTKHQRKH), 370–392 (YECTECGKSFAVNSVLRLHQRTH), 398–420 (YACKECGKSFSQKSHFIIHQRKH), and 426–448 (YECQECGETFIQKSQLTAHQKTH).

The protein belongs to the krueppel C2H2-type zinc-finger protein family.

It is found in the nucleus. In terms of biological role, may be involved in transcriptional regulation. This chain is Zinc finger protein 25 (ZNF25), found in Homo sapiens (Human).